The chain runs to 316 residues: 4-hydroxy-3-methylbut-2-enyl diphosphate reductase (316 aa).

A [4Fe-4S] cluster-binding site is contributed by cysteine 12. Residues histidine 41 and histidine 74 each coordinate (2E)-4-hydroxy-3-methylbut-2-enyl diphosphate. Residues histidine 41 and histidine 74 each coordinate dimethylallyl diphosphate. Isopentenyl diphosphate is bound by residues histidine 41 and histidine 74. Cysteine 96 lines the [4Fe-4S] cluster pocket. (2E)-4-hydroxy-3-methylbut-2-enyl diphosphate is bound at residue histidine 124. Histidine 124 is a dimethylallyl diphosphate binding site. Histidine 124 contributes to the isopentenyl diphosphate binding site. Glutamate 126 acts as the Proton donor in catalysis. Residue threonine 167 coordinates (2E)-4-hydroxy-3-methylbut-2-enyl diphosphate. Position 197 (cysteine 197) interacts with [4Fe-4S] cluster. (2E)-4-hydroxy-3-methylbut-2-enyl diphosphate contacts are provided by serine 225, serine 226, asparagine 227, and serine 269. Residues serine 225, serine 226, asparagine 227, and serine 269 each contribute to the dimethylallyl diphosphate site. Isopentenyl diphosphate is bound by residues serine 225, serine 226, asparagine 227, and serine 269.

It belongs to the IspH family. In terms of assembly, homodimer. Requires [4Fe-4S] cluster as cofactor.

The catalysed reaction is isopentenyl diphosphate + 2 oxidized [2Fe-2S]-[ferredoxin] + H2O = (2E)-4-hydroxy-3-methylbut-2-enyl diphosphate + 2 reduced [2Fe-2S]-[ferredoxin] + 2 H(+). It carries out the reaction dimethylallyl diphosphate + 2 oxidized [2Fe-2S]-[ferredoxin] + H2O = (2E)-4-hydroxy-3-methylbut-2-enyl diphosphate + 2 reduced [2Fe-2S]-[ferredoxin] + 2 H(+). It functions in the pathway isoprenoid biosynthesis; dimethylallyl diphosphate biosynthesis; dimethylallyl diphosphate from (2E)-4-hydroxy-3-methylbutenyl diphosphate: step 1/1. Its pathway is isoprenoid biosynthesis; isopentenyl diphosphate biosynthesis via DXP pathway; isopentenyl diphosphate from 1-deoxy-D-xylulose 5-phosphate: step 6/6. Functionally, catalyzes the conversion of 1-hydroxy-2-methyl-2-(E)-butenyl 4-diphosphate (HMBPP) into a mixture of isopentenyl diphosphate (IPP) and dimethylallyl diphosphate (DMAPP). Acts in the terminal step of the DOXP/MEP pathway for isoprenoid precursor biosynthesis. The chain is 4-hydroxy-3-methylbut-2-enyl diphosphate reductase from Sodalis glossinidius (strain morsitans).